The sequence spans 683 residues: Methionine--tRNA ligase (683 aa).

The 'HIGH' region motif lies at 15–25 (PYANGSIHLGH). Residues Cys146, Cys149, Cys159, and Cys162 each contribute to the Zn(2+) site. The 'KMSKS' region signature appears at 332 to 336 (KMSKS). Lys335 provides a ligand contact to ATP. The tRNA-binding domain occupies 582–683 (DFAKVDLRIA…QGAQAGMRVM (102 aa)).

The protein belongs to the class-I aminoacyl-tRNA synthetase family. MetG type 1 subfamily. Homodimer. It depends on Zn(2+) as a cofactor.

The protein localises to the cytoplasm. It catalyses the reaction tRNA(Met) + L-methionine + ATP = L-methionyl-tRNA(Met) + AMP + diphosphate. Is required not only for elongation of protein synthesis but also for the initiation of all mRNA translation through initiator tRNA(fMet) aminoacylation. This chain is Methionine--tRNA ligase, found in Vibrio cholerae serotype O1 (strain ATCC 39541 / Classical Ogawa 395 / O395).